The following is a 205-amino-acid chain: Protein N-terminal glutamine amidohydrolase (205 aa).

Active-site residues include cysteine 20, histidine 74, and aspartate 90.

Belongs to the NTAQ1 family. Monomer.

It carries out the reaction N-terminal L-glutaminyl-[protein] + H2O = N-terminal L-glutamyl-[protein] + NH4(+). In terms of biological role, mediates the side-chain deamidation of N-terminal glutamine residues to glutamate, an important step in N-end rule pathway of protein degradation. Conversion of the resulting N-terminal glutamine to glutamate renders the protein susceptible to arginylation, polyubiquitination and degradation as specified by the N-end rule. Does not act on substrates with internal or C-terminal glutamine and does not act on non-glutamine residues in any position. The chain is Protein N-terminal glutamine amidohydrolase (tun) from Drosophila erecta (Fruit fly).